Consider the following 328-residue polypeptide: UPF0285 protein Mevan_1551 (328 aa).

Belongs to the UPF0285 family.

The sequence is that of UPF0285 protein Mevan_1551 from Methanococcus vannielii (strain ATCC 35089 / DSM 1224 / JCM 13029 / OCM 148 / SB).